A 522-amino-acid polypeptide reads, in one-letter code: 2-isopropylmalate synthase (522 aa).

Residues Val5–His267 form the Pyruvate carboxyltransferase domain. Mn(2+) contacts are provided by Asp14, His202, His204, and Asn238. A regulatory domain region spans residues Gln392–Val522.

The protein belongs to the alpha-IPM synthase/homocitrate synthase family. LeuA type 1 subfamily. Homodimer. Mn(2+) serves as cofactor.

Its subcellular location is the cytoplasm. The enzyme catalyses 3-methyl-2-oxobutanoate + acetyl-CoA + H2O = (2S)-2-isopropylmalate + CoA + H(+). It functions in the pathway amino-acid biosynthesis; L-leucine biosynthesis; L-leucine from 3-methyl-2-oxobutanoate: step 1/4. Its function is as follows. Catalyzes the condensation of the acetyl group of acetyl-CoA with 3-methyl-2-oxobutanoate (2-ketoisovalerate) to form 3-carboxy-3-hydroxy-4-methylpentanoate (2-isopropylmalate). The chain is 2-isopropylmalate synthase from Shewanella baltica (strain OS185).